The following is a 680-amino-acid chain: Harmonin-binding protein USHBP1 (680 aa).

The span at 1–15 (MSARATRPRSRRGRH) shows a compositional bias: basic residues. 3 disordered regions span residues 1–101 (MSAR…GPAE), 135–162 (PVEAEDRDPGAPGSFGNEEEASGPGQQE), and 217–250 (ASPPPSMLRAGRRNSNSSSSGAERRPWAPQDSPM). The span at 76-86 (PEERREPEVEA) shows a compositional bias: basic and acidic residues. Coiled-coil stretches lie at residues 177–219 (LGTR…EASP), 362–386 (ATNGDLQAAEKEASRLLVKKEVAMD), and 479–506 (LADLVLRLQLAQREKRGLELREAALRAQ). The interval 524–562 (LMGDGSSGGSSEDPSSEEEAGEDRQQHYQGPPALLGGQM) is disordered. A coiled-coil region spans residues 573 to 661 (QELSASLTRA…QQAEELAVLT (89 aa)).

Belongs to the MCC family. In terms of assembly, interacts via its C-terminus with the first PDZ domain of USH1C.

The chain is Harmonin-binding protein USHBP1 from Rattus norvegicus (Rat).